The chain runs to 122 residues: MARIAGVNIPTNKRVEIALTYIHGIGPTTAKKIVTKLGIAPERRVQDLSDNEVLQIREAIDADYTVEGDLRRQVAMNIKRLMDLACYRGLRHRKGLPVRGQRTHTNARTRKGKAKPIAGKKK.

A disordered region spans residues 95–122; it reads GLPVRGQRTHTNARTRKGKAKPIAGKKK.

The protein belongs to the universal ribosomal protein uS13 family. In terms of assembly, part of the 30S ribosomal subunit. Forms a loose heterodimer with protein S19. Forms two bridges to the 50S subunit in the 70S ribosome.

Its function is as follows. Located at the top of the head of the 30S subunit, it contacts several helices of the 16S rRNA. In the 70S ribosome it contacts the 23S rRNA (bridge B1a) and protein L5 of the 50S subunit (bridge B1b), connecting the 2 subunits; these bridges are implicated in subunit movement. Contacts the tRNAs in the A and P-sites. This is Small ribosomal subunit protein uS13 from Zymomonas mobilis subsp. mobilis (strain ATCC 31821 / ZM4 / CP4).